Consider the following 127-residue polypeptide: Protein NEGATIVE REGULATOR OF RESISTANCE (127 aa).

2 disordered regions span residues M1–V28 and T47–A127. The span at P112–A127 shows a compositional bias: low complexity.

The protein belongs to the NPR1-interactor family. Interacts with NPR1/NH1. Interacts with NPR3/NH3.

The protein resides in the nucleus. In terms of biological role, acts as a negative regulator of disease resistance. Acts on basal resistance, age-related resistance and resistance mediated by the LRR receptor kinase XA21. Plants over-expressing NRR display enhanced susceptibility to the bacterial blight Xanthomonas oryzae pv. oryzae (Xoo). Binds to and represses NPR1/NH1-mediated transcriptional activation of LG2 in vitro. This chain is Protein NEGATIVE REGULATOR OF RESISTANCE, found in Oryza sativa subsp. japonica (Rice).